We begin with the raw amino-acid sequence, 239 residues long: SkfA peptide export ATP-binding protein SkfE (239 aa).

Residues 4–232 (MQVQNLSKCY…AEWRKEVIRL (229 aa)) enclose the ABC transporter domain. 36-43 (GPNGAGKT) provides a ligand contact to ATP.

This sequence belongs to the ABC transporter superfamily. SkfA peptide export (TC 3.A.1.128.1) family.

Its subcellular location is the cell membrane. It catalyses the reaction sulfate(out) + ATP + H2O = sulfate(in) + ADP + phosphate + H(+). The enzyme catalyses thiosulfate(out) + ATP + H2O = thiosulfate(in) + ADP + phosphate + H(+). Its function is as follows. Probably part of the ABC transporter SkfEF involved in the export of the bacteriocin SKF. Probably responsible for energy coupling to the transport system. The sequence is that of SkfA peptide export ATP-binding protein SkfE from Bacillus subtilis (strain 168).